A 362-amino-acid polypeptide reads, in one-letter code: Ferrochelatase (362 aa).

Residues His-228 and Glu-309 each contribute to the Fe cation site.

Belongs to the ferrochelatase family.

It is found in the cytoplasm. The catalysed reaction is heme b + 2 H(+) = protoporphyrin IX + Fe(2+). It functions in the pathway porphyrin-containing compound metabolism; protoheme biosynthesis; protoheme from protoporphyrin-IX: step 1/1. Catalyzes the ferrous insertion into protoporphyrin IX. This chain is Ferrochelatase, found in Bordetella bronchiseptica (strain ATCC BAA-588 / NCTC 13252 / RB50) (Alcaligenes bronchisepticus).